The sequence spans 128 residues: L-ectoine synthase (128 aa).

It belongs to the ectoine synthase family.

It catalyses the reaction (2S)-4-acetamido-2-aminobutanoate = L-ectoine + H2O. It functions in the pathway amine and polyamine biosynthesis; ectoine biosynthesis; L-ectoine from L-aspartate 4-semialdehyde: step 3/3. Catalyzes the circularization of gamma-N-acetyl-alpha,gamma-diaminobutyric acid (ADABA) to ectoine (1,4,5,6-tetrahydro-2-methyl-4-pyrimidine carboxylic acid), which is an excellent osmoprotectant. This chain is L-ectoine synthase, found in Aliivibrio fischeri (strain MJ11) (Vibrio fischeri).